Consider the following 405-residue polypeptide: Phosphopentomutase (405 aa).

Asp10, Asp303, His308, Asp344, His345, and His356 together coordinate Mn(2+).

This sequence belongs to the phosphopentomutase family. Mn(2+) serves as cofactor.

It is found in the cytoplasm. The catalysed reaction is 2-deoxy-alpha-D-ribose 1-phosphate = 2-deoxy-D-ribose 5-phosphate. It carries out the reaction alpha-D-ribose 1-phosphate = D-ribose 5-phosphate. The protein operates within carbohydrate degradation; 2-deoxy-D-ribose 1-phosphate degradation; D-glyceraldehyde 3-phosphate and acetaldehyde from 2-deoxy-alpha-D-ribose 1-phosphate: step 1/2. Its function is as follows. Isomerase that catalyzes the conversion of deoxy-ribose 1-phosphate (dRib-1-P) and ribose 1-phosphate (Rib-1-P) to deoxy-ribose 5-phosphate (dRib-5-P) and ribose 5-phosphate (Rib-5-P), respectively. The polypeptide is Phosphopentomutase (Shewanella denitrificans (strain OS217 / ATCC BAA-1090 / DSM 15013)).